We begin with the raw amino-acid sequence, 672 residues long: Acetyl-coenzyme A synthetase (672 aa).

Residues 217–220 and Thr335 each bind CoA; that span reads RRGK. ATP contacts are provided by residues 411–413, 435–440, Asp529, Arg544, and Arg555; these read GEP and DTWWQT. Val566, His568, and Ile571 together coordinate Mg(2+). Residue Arg613 coordinates CoA. N6-acetyllysine is present on Lys638.

It belongs to the ATP-dependent AMP-binding enzyme family. Requires Mg(2+) as cofactor. Acetylated. Deacetylation by the SIR2-homolog deacetylase activates the enzyme. Post-translationally, the N-terminus is blocked.

The catalysed reaction is acetate + ATP + CoA = acetyl-CoA + AMP + diphosphate. Functionally, catalyzes the conversion of acetate into acetyl-CoA (AcCoA), an essential intermediate at the junction of anabolic and catabolic pathways. AcsA undergoes a two-step reaction. In the first half reaction, AcsA combines acetate with ATP to form acetyl-adenylate (AcAMP) intermediate. In the second half reaction, it can then transfer the acetyl group from AcAMP to the sulfhydryl group of CoA, forming the product AcCoA. The sequence is that of Acetyl-coenzyme A synthetase from Methanothrix soehngenii (Methanosaeta concilii).